We begin with the raw amino-acid sequence, 379 residues long: Cytochrome b (379 aa).

The next 4 helical transmembrane spans lie at Phe33–Met53, Trp77–Val98, Trp113–Leu133, and Phe178–Leu198. Residues His83 and His97 each coordinate heme b. Heme b contacts are provided by His182 and His196. An a ubiquinone-binding site is contributed by His201. The next 4 membrane-spanning stretches (helical) occupy residues Thr226–Tyr246, Leu288–Gln308, Leu320–Gly340, and Phe347–Pro367.

It belongs to the cytochrome b family. The cytochrome bc1 complex contains 11 subunits: 3 respiratory subunits (MT-CYB, CYC1 and UQCRFS1), 2 core proteins (UQCRC1 and UQCRC2) and 6 low-molecular weight proteins (UQCRH/QCR6, UQCRB/QCR7, UQCRQ/QCR8, UQCR10/QCR9, UQCR11/QCR10 and a cleavage product of UQCRFS1). This cytochrome bc1 complex then forms a dimer. Requires heme b as cofactor.

The protein localises to the mitochondrion inner membrane. Its function is as follows. Component of the ubiquinol-cytochrome c reductase complex (complex III or cytochrome b-c1 complex) that is part of the mitochondrial respiratory chain. The b-c1 complex mediates electron transfer from ubiquinol to cytochrome c. Contributes to the generation of a proton gradient across the mitochondrial membrane that is then used for ATP synthesis. The polypeptide is Cytochrome b (MT-CYB) (Lepilemur dorsalis (Grey-backed sportive lemur)).